A 715-amino-acid polypeptide reads, in one-letter code: MNYLKPTIFLILCLVTFVYSQPSTLTIQGTIFDQHPDYNNNFEPKGGSIKKNLVLKTLGSSKVPTLVSLDPEDDTNEDGRMITPSLFQYFYQTSSKPLTKNSGANVPIPINLVLNYDSKKQVYVYNDQYFFPIDYQGFDVDSKYRTYNNGSGYHNFHFCLKLNTKFTYQGIEDFYFIGDDDVWVFINNKLVVDLGGLHSRETGSVDVTKLGLTKGSTYDFDFFYCERHTTASTIRIETNLQVFCPWYDYCGVCSGDGSTCCNKDTTCNDGKKCTIDACPPPKTVINKAGSKITDADIAPYCSHTDVSCPDPDLCNNNNCDASTGNCKTTPITCSNQDSKCLLAQTCDPKSGCIYKSKCTGVCDTGVCDGGDCVQKSNSTCANELGNNPCMVYSCGKNGCEAKPKCPQNPSTPCDVAYCDAGECKVQHLSASECNCGCDASDLCSKNNCVNNVCVPLPIDGIDDGNACTKDTCVNGNIFHTPINKCSGCMTCNPVSGNCDLSDTVCQDGNECTTNVCESSDSVLGVCTNSTVECGATNTDKCIQFSCNEATGCQQSAVVCPDVGSCLVGYCDSKQGCLTKPRSCDTGVFCLTGECIENAGGCIVYEKRCDADNGRCQQGVCVNNTATEEGYCKSEDYDPLPFICKTGAVVSTAVIAGVTVAGAVALGVFIYGGKRGYDYWKESRNVQFSGSNSNPLYEQNPNGSGVNPLYNDNSAL.

An N-terminal signal peptide occupies residues 1 to 20; the sequence is MNYLKPTIFLILCLVTFVYS. Residues 21 to 651 are Extracellular-facing; it reads QPSTLTIQGT…ICKTGAVVST (631 aa). Residues 115 to 256 enclose the PA14 domain; the sequence is NYDSKKQVYV…YDYCGVCSGD (142 aa). 4 N-linked (GlcNAc...) asparagine glycosylation sites follow: asparagine 149, asparagine 377, asparagine 528, and asparagine 622. Residues 652 to 672 traverse the membrane as a helical segment; that stretch reads AVIAGVTVAGAVALGVFIYGG. Over 673 to 715 the chain is Cytoplasmic; it reads KRGYDYWKESRNVQFSGSNSNPLYEQNPNGSGVNPLYNDNSAL. The disordered stretch occupies residues 690–715; sequence SNSNPLYEQNPNGSGVNPLYNDNSAL.

This sequence belongs to the prespore-cell-inducing factor family.

It localises to the membrane. This is Protein psiH (psiH) from Dictyostelium discoideum (Social amoeba).